Reading from the N-terminus, the 190-residue chain is RING finger protein 227 (190 aa).

The segment at 18 to 81 (CNICYRPFNL…RRVVTCPFCR (64 aa)) adopts an RING-type zinc-finger fold. The interval 111–145 (KCERDEAGNPAKESSDADGEAEEEGESEKGAGPRS) is disordered. Positions 126-136 (DADGEAEEEGE) are enriched in acidic residues.

The polypeptide is RING finger protein 227 (Homo sapiens (Human)).